Consider the following 424-residue polypeptide: Histidine--tRNA ligase (424 aa).

It belongs to the class-II aminoacyl-tRNA synthetase family. Homodimer.

The protein localises to the cytoplasm. The enzyme catalyses tRNA(His) + L-histidine + ATP = L-histidyl-tRNA(His) + AMP + diphosphate + H(+). The protein is Histidine--tRNA ligase of Pediococcus pentosaceus (strain ATCC 25745 / CCUG 21536 / LMG 10740 / 183-1w).